Here is a 168-residue protein sequence, read N- to C-terminus: Putative defense protein 1 (168 aa).

Positions 1 to 18 (MMFAYIVAVVSALALTSA) are cleaved as a signal peptide. The Reelin domain occupies 19 to 168 (FPTGAPRSAC…SAPVKILSHH (150 aa)). Cysteine 28 and cysteine 105 are disulfide-bonded.

Belongs to the insect defense protein family. In terms of tissue distribution, very highly expressed in midgut, and highly expressed in fat body, silk gland and epidermis.

The protein resides in the secreted. In terms of biological role, as this protein is expressed upon bacterial infection, it may have antimicrobial activity. The polypeptide is Putative defense protein 1 (Antheraea mylitta (Tasar silkworm)).